A 323-amino-acid chain; its full sequence is Fructose-1,6-bisphosphatase class 1 (323 aa).

Residues glutamate 84, aspartate 103, leucine 105, and aspartate 106 each coordinate Mg(2+). Residues 106 to 109, asparagine 198, and lysine 264 each bind substrate; that span reads DGSS. A Mg(2+)-binding site is contributed by glutamate 270.

The protein belongs to the FBPase class 1 family. As to quaternary structure, homotetramer. Requires Mg(2+) as cofactor.

The protein localises to the cytoplasm. It carries out the reaction beta-D-fructose 1,6-bisphosphate + H2O = beta-D-fructose 6-phosphate + phosphate. Its pathway is carbohydrate biosynthesis; gluconeogenesis. The protein is Fructose-1,6-bisphosphatase class 1 of Hydrogenovibrio crunogenus (strain DSM 25203 / XCL-2) (Thiomicrospira crunogena).